The sequence spans 380 residues: MTKKRYTLLKKDGKARRGEFVTPHGTIQTPVFMNVGTLAAIKGAVSSMDLKEIGCQVELSNTYHLHLRPGDKIVKQMGGLHNFMNWDRPILTDSGGFQVFSLAGMRKIKEEGVYFNSHIDGRKIFMGPEESMQIQSNLGSTIAMAFDECIPNPSTREYVEKSVARTTRWLERCKKEMDRLNSLDDTVNKEQMLFGINQGGVYEDIRIEHAKTIREMDLDGYAIGGLAVGETHEEMYRVIDAVVPHLPEDKPIYLMGVGLPSNILEAVERGVDFFDCVLPARNGRHGHVFTKEGKINLMNAKFELDARPIDEGCQCPACKNYTRAYIRHLFKAKEMLAMRLCVLHNLYFYNKLMEDIRDAIDGGYFAEFKAKKLEEWNGRA.

Residue Asp-93 is the Proton acceptor of the active site. Substrate contacts are provided by residues 93–97 (DSGGF), Asp-147, Gln-198, and Gly-225. The RNA binding stretch occupies residues 256–262 (GVGLPSN). Catalysis depends on Asp-275, which acts as the Nucleophile. The interval 280–284 (ARNGR) is RNA binding; important for wobble base 34 recognition. Zn(2+)-binding residues include Cys-313, Cys-315, Cys-318, and His-344.

This sequence belongs to the queuine tRNA-ribosyltransferase family. As to quaternary structure, homodimer. Within each dimer, one monomer is responsible for RNA recognition and catalysis, while the other monomer binds to the replacement base PreQ1. Zn(2+) serves as cofactor.

The catalysed reaction is 7-aminomethyl-7-carbaguanine + guanosine(34) in tRNA = 7-aminomethyl-7-carbaguanosine(34) in tRNA + guanine. It participates in tRNA modification; tRNA-queuosine biosynthesis. In terms of biological role, catalyzes the base-exchange of a guanine (G) residue with the queuine precursor 7-aminomethyl-7-deazaguanine (PreQ1) at position 34 (anticodon wobble position) in tRNAs with GU(N) anticodons (tRNA-Asp, -Asn, -His and -Tyr). Catalysis occurs through a double-displacement mechanism. The nucleophile active site attacks the C1' of nucleotide 34 to detach the guanine base from the RNA, forming a covalent enzyme-RNA intermediate. The proton acceptor active site deprotonates the incoming PreQ1, allowing a nucleophilic attack on the C1' of the ribose to form the product. After dissociation, two additional enzymatic reactions on the tRNA convert PreQ1 to queuine (Q), resulting in the hypermodified nucleoside queuosine (7-(((4,5-cis-dihydroxy-2-cyclopenten-1-yl)amino)methyl)-7-deazaguanosine). The polypeptide is Queuine tRNA-ribosyltransferase (Clostridium perfringens (strain ATCC 13124 / DSM 756 / JCM 1290 / NCIMB 6125 / NCTC 8237 / Type A)).